The primary structure comprises 49 residues: L-amino-acid oxidase (49 aa).

Residue M43–S44 participates in FAD binding.

This sequence belongs to the flavin monoamine oxidase family. FIG1 subfamily. Homodimer; non-covalently linked. Requires FAD as cofactor. Post-translationally, N-glycosylated. As to expression, expressed by the venom gland.

The protein resides in the secreted. The catalysed reaction is an L-alpha-amino acid + O2 + H2O = a 2-oxocarboxylate + H2O2 + NH4(+). It catalyses the reaction L-leucine + O2 + H2O = 4-methyl-2-oxopentanoate + H2O2 + NH4(+). Catalyzes an oxidative deamination of predominantly hydrophobic and aromatic L-amino acids, thus producing hydrogen peroxide that may contribute to the diverse toxic effects of this enzyme. Shows activity on L-Leu. Exhibits diverse biological activities, such as hemorrhage, hemolysis, edema, antibacterial and antiparasitic activities, as well as regulation of platelet aggregation. Its effect on platelets is controversial, since it either induces aggregation or inhibits agonist-induced aggregation. These different effects are probably due to different experimental conditions. In addition, this protein induces apoptosis and necrosis and has inhibitory effects on rat kidney function (decrease of blood flow and glomerular filtration). The polypeptide is L-amino-acid oxidase (Bothrops insularis (Golden lancehead)).